The following is a 339-amino-acid chain: Large ribosomal subunit protein uL10 (339 aa).

A disordered region spans residues 307–339 (VEEEKKEEKVEEEKEDEEASEEEALAGLSALFG). Over residues 308-318 (EEEKKEEKVEE) the composition is skewed to basic and acidic residues. A compositionally biased stretch (acidic residues) spans 319-330 (EKEDEEASEEEA).

This sequence belongs to the universal ribosomal protein uL10 family. In terms of assembly, part of the 50S ribosomal subunit. Forms part of the ribosomal stalk which helps the ribosome interact with GTP-bound translation factors. Forms a heptameric L10(L12)2(L12)2(L12)2 complex, where L10 forms an elongated spine to which the L12 dimers bind in a sequential fashion.

Forms part of the ribosomal stalk, playing a central role in the interaction of the ribosome with GTP-bound translation factors. The sequence is that of Large ribosomal subunit protein uL10 from Pyrococcus furiosus (strain ATCC 43587 / DSM 3638 / JCM 8422 / Vc1).